A 386-amino-acid polypeptide reads, in one-letter code: Succinate--CoA ligase [ADP-forming] subunit beta (386 aa).

The ATP-grasp domain occupies 9 to 244 (KQILKRFGIS…YDEEIPEEIE (236 aa)). ATP-binding positions include Lys46, 53–55 (GRG), Glu99, Cys102, and Glu107. Mg(2+)-binding residues include Asn199 and Asp213. Residues Asn264 and 320 to 322 (GIM) contribute to the substrate site.

Belongs to the succinate/malate CoA ligase beta subunit family. Heterotetramer of two alpha and two beta subunits. Requires Mg(2+) as cofactor.

The catalysed reaction is succinate + ATP + CoA = succinyl-CoA + ADP + phosphate. The enzyme catalyses GTP + succinate + CoA = succinyl-CoA + GDP + phosphate. Its pathway is carbohydrate metabolism; tricarboxylic acid cycle; succinate from succinyl-CoA (ligase route): step 1/1. Succinyl-CoA synthetase functions in the citric acid cycle (TCA), coupling the hydrolysis of succinyl-CoA to the synthesis of either ATP or GTP and thus represents the only step of substrate-level phosphorylation in the TCA. The beta subunit provides nucleotide specificity of the enzyme and binds the substrate succinate, while the binding sites for coenzyme A and phosphate are found in the alpha subunit. The protein is Succinate--CoA ligase [ADP-forming] subunit beta of Ehrlichia ruminantium (strain Welgevonden).